The following is a 68-amino-acid chain: Large ribosomal subunit protein uL29 (68 aa).

The protein belongs to the universal ribosomal protein uL29 family.

This chain is Large ribosomal subunit protein uL29, found in Streptococcus uberis (strain ATCC BAA-854 / 0140J).